Here is a 96-residue protein sequence, read N- to C-terminus: UPF0235 protein YPK_0828 (96 aa).

This sequence belongs to the UPF0235 family.

This Yersinia pseudotuberculosis serotype O:3 (strain YPIII) protein is UPF0235 protein YPK_0828.